A 588-amino-acid polypeptide reads, in one-letter code: Sulfite reductase [NADPH] hemoprotein beta-component (588 aa).

Positions 442, 448, 487, and 491 each coordinate [4Fe-4S] cluster. Residue Cys-491 coordinates siroheme.

The protein belongs to the nitrite and sulfite reductase 4Fe-4S domain family. As to quaternary structure, alpha(8)-beta(8). The alpha component is a flavoprotein, the beta component is a hemoprotein. Siroheme serves as cofactor. [4Fe-4S] cluster is required as a cofactor.

It catalyses the reaction hydrogen sulfide + 3 NADP(+) + 3 H2O = sulfite + 3 NADPH + 4 H(+). It functions in the pathway sulfur metabolism; hydrogen sulfide biosynthesis; hydrogen sulfide from sulfite (NADPH route): step 1/1. Component of the sulfite reductase complex that catalyzes the 6-electron reduction of sulfite to sulfide. This is one of several activities required for the biosynthesis of L-cysteine from sulfate. In Actinobacillus pleuropneumoniae serotype 5b (strain L20), this protein is Sulfite reductase [NADPH] hemoprotein beta-component.